The following is a 509-amino-acid chain: Hexokinase-4, chloroplastic (509 aa).

The N-terminal 37 residues, 1–37 (MSAAAAIASPIPAAIAVVQQQRRGRSRGGGSGAAAVR), are a transit peptide targeting the chloroplast. In terms of domain architecture, Hexokinase spans 45-496 (SAIAPILADL…SGIGAALLAA (452 aa)). Residues 100-238 (TGNETGLFYA…GLDMRVSALV (139 aa)) are hexokinase small subdomain. Positions 114, 115, and 116 each coordinate ADP. 4 residues coordinate D-glucose: Thr204, Lys205, Asn239, and Asp240. The hexokinase large subdomain stretch occupies residues 239–485 (NDTVGTLAGA…NRIAIEHTKD (247 aa)). Thr263 contacts ADP. D-glucose is bound by residues Asn266, Glu294, and Glu324. An ADP-binding site is contributed by Gly450.

It belongs to the hexokinase family. In terms of tissue distribution, expressed in roots, leaves, flowers, immature seeds, endosperm and seed coat.

Its subcellular location is the plastid. The protein resides in the chloroplast stroma. It carries out the reaction a D-hexose + ATP = a D-hexose 6-phosphate + ADP + H(+). The catalysed reaction is D-fructose + ATP = D-fructose 6-phosphate + ADP + H(+). It catalyses the reaction D-glucose + ATP = D-glucose 6-phosphate + ADP + H(+). It functions in the pathway carbohydrate metabolism; hexose metabolism. The protein operates within carbohydrate degradation; glycolysis; D-glyceraldehyde 3-phosphate and glycerone phosphate from D-glucose: step 1/4. Functionally, fructose and glucose phosphorylating enzyme. This is Hexokinase-4, chloroplastic (HXK4) from Oryza sativa subsp. japonica (Rice).